The chain runs to 424 residues: UDP-N-acetylglucosamine 1-carboxyvinyltransferase (424 aa).

22 to 23 (KN) lines the phosphoenolpyruvate pocket. Residue Arg-98 coordinates UDP-N-acetyl-alpha-D-glucosamine. Catalysis depends on Cys-122, which acts as the Proton donor. Cys-122 is modified (2-(S-cysteinyl)pyruvic acid O-phosphothioketal). UDP-N-acetyl-alpha-D-glucosamine-binding positions include 127–131 (RPVDQ), Asp-312, and Ile-334.

Belongs to the EPSP synthase family. MurA subfamily.

The protein resides in the cytoplasm. It catalyses the reaction phosphoenolpyruvate + UDP-N-acetyl-alpha-D-glucosamine = UDP-N-acetyl-3-O-(1-carboxyvinyl)-alpha-D-glucosamine + phosphate. It functions in the pathway cell wall biogenesis; peptidoglycan biosynthesis. Cell wall formation. Adds enolpyruvyl to UDP-N-acetylglucosamine. The chain is UDP-N-acetylglucosamine 1-carboxyvinyltransferase from Xanthomonas oryzae pv. oryzae (strain MAFF 311018).